The primary structure comprises 67 residues: Conotoxin Cal12.1p2 (67 aa).

A propeptide spanning residues 1-21 is cleaved from the precursor; that stretch reads DLITNSYTRGKPRHVTSWRNL.

Post-translationally, contains 4 disulfide bonds. In terms of tissue distribution, expressed by the venom duct.

The protein resides in the secreted. In Californiconus californicus (California cone), this protein is Conotoxin Cal12.1p2.